The following is a 72-amino-acid chain: Large ribosomal subunit protein uL29 (72 aa).

This sequence belongs to the universal ribosomal protein uL29 family.

The sequence is that of Large ribosomal subunit protein uL29 from Caldicellulosiruptor bescii (strain ATCC BAA-1888 / DSM 6725 / KCTC 15123 / Z-1320) (Anaerocellum thermophilum).